Consider the following 449-residue polypeptide: Hyaluronidase (449 aa).

The signal sequence occupies residues 1 to 23; the sequence is MYHIWIKFLAAWIFLKRFNGVHV. 2 cysteine pairs are disulfide-bonded: C47–C340 and C211–C227. N67, N103, and N111 each carry an N-linked (GlcNAc...) asparagine glycan. E135 acts as the Proton donor in catalysis. N153 carries N-linked (GlcNAc...) asparagine glycosylation. Residue N357 is glycosylated (N-linked (GlcNAc...) asparagine). 3 disulfide bridges follow: C365–C376, C370–C427, and C429–C438. N401 carries N-linked (GlcNAc...) asparagine glycosylation. The region spanning 427–438 is the EGF-like domain; it reads CQCYQGWKGLYC.

The protein belongs to the glycosyl hydrolase 56 family. In terms of assembly, monomer. Expressed by the venom gland.

The protein resides in the secreted. The catalysed reaction is Random hydrolysis of (1-&gt;4)-linkages between N-acetyl-beta-D-glucosamine and D-glucuronate residues in hyaluronate.. Snake venom endo-hyaluronidase that degrades hyaluronan to smaller oligosaccharide fragments. In venom, it is not toxic by itself, but increases the diffusion of other venom proteins by degrading the extracellular matrix. In addition, it displays antiedematogenic activity. This chain is Hyaluronidase, found in Echis pyramidum leakeyi (Leakey's carpet viper).